The sequence spans 239 residues: Prolyl hydroxylase EGLN3 (239 aa).

A beta(2)beta(3) 'finger-like' loop region spans residues 62-73 (AGPRAGVSKRHL). Positions 88 to 104 (CEAISFLLSLIDRLVLY) are required for interaction with ADRB2. Residues 116 to 214 (ERSKAMVACY…RYAMTVWYFD (99 aa)) form the Fe2OG dioxygenase domain. Histidine 135, aspartate 137, and histidine 196 together coordinate Fe cation. Arginine 205 is a 2-oxoglutarate binding site.

As to quaternary structure, interacts with BCL2 (via its BH4 domain); the interaction disrupts the BAX-BCL4 complex inhibiting the anti-apoptotic activity of BCL2. Interacts with WDR83; the interaction leads to almost complete elimination of HIF-mediated reporter activity. Interacts with ADRB2; the interaction hydroxylates ADRB2 facilitating its ubiquitination by the VHL-E3 ligase complex. Interacts with PAX2; the interaction targets PAX2 for destruction. Interacts with PKM; the interaction hydroxylates PKM in hypoxia. Interacts with LIMD1, WTIP and AJUBA. Fe(2+) serves as cofactor. Requires L-ascorbate as cofactor. Ubiquitinated by SIAH1 and/or SIAH2 in response to the unfolded protein response (UPR), leading to its degradation. As to expression, widely expressed at low levels. Expressed at higher levels in adult heart (cardiac myocytes, aortic endothelial cells and coronary artery smooth muscle), lung and placenta, and in fetal spleen, heart and skeletal muscle. Also expressed in pancreas. Localized to pancreatic acini and islet cells.

The protein localises to the nucleus. Its subcellular location is the cytoplasm. It carries out the reaction L-prolyl-[protein] + 2-oxoglutarate + O2 = trans-4-hydroxy-L-prolyl-[protein] + succinate + CO2. The catalysed reaction is L-prolyl-[hypoxia-inducible factor alpha subunit] + 2-oxoglutarate + O2 = trans-4-hydroxy-L-prolyl-[hypoxia-inducible factor alpha subunit] + succinate + CO2. Its activity is regulated as follows. Activated in cardiovascular cells and Hela cells following exposure to hypoxia. Inhibited by polynitrogen compounds probably by chelation to Fe(2+) ions. Prolyl hydroxylase that mediates hydroxylation of proline residues in target proteins, such as PKM, TELO2, ATF4 and HIF1A. Target proteins are preferentially recognized via a LXXLAP motif. Cellular oxygen sensor that catalyzes, under normoxic conditions, the post-translational formation of 4-hydroxyproline in hypoxia-inducible factor (HIF) alpha proteins. Hydroxylates a specific proline found in each of the oxygen-dependent degradation (ODD) domains (N-terminal, NODD, and C-terminal, CODD) of HIF1A. Also hydroxylates HIF2A. Has a preference for the CODD site for both HIF1A and HIF2A. Hydroxylation on the NODD site by EGLN3 appears to require prior hydroxylation on the CODD site. Hydroxylated HIFs are then targeted for proteasomal degradation via the von Hippel-Lindau ubiquitination complex. Under hypoxic conditions, the hydroxylation reaction is attenuated allowing HIFs to escape degradation resulting in their translocation to the nucleus, heterodimerization with HIF1B, and increased expression of hypoxy-inducible genes. ELGN3 is the most important isozyme in limiting physiological activation of HIFs (particularly HIF2A) in hypoxia. Also hydroxylates PKM in hypoxia, limiting glycolysis. Under normoxia, hydroxylates and regulates the stability of ADRB2. Regulator of cardiomyocyte and neuronal apoptosis. In cardiomyocytes, inhibits the anti-apoptotic effect of BCL2 by disrupting the BAX-BCL2 complex. In neurons, has a NGF-induced proapoptotic effect, probably through regulating CASP3 activity. Also essential for hypoxic regulation of neutrophilic inflammation. Plays a crucial role in DNA damage response (DDR) by hydroxylating TELO2, promoting its interaction with ATR which is required for activation of the ATR/CHK1/p53 pathway. Also mediates hydroxylation of ATF4, leading to decreased protein stability of ATF4. This Homo sapiens (Human) protein is Prolyl hydroxylase EGLN3.